We begin with the raw amino-acid sequence, 522 residues long: MSQLNLIPFFCVIIVLSVEDFPLYTIPEKIGPWTPIDLIHLSCPNNLQSEDEGCGTSSVFSYVELKTGYLTHQKVSGFTCTGVVNEAVTYTNFVGYVTTTFKRKHFKPTALACRDAYHWKISGDPRYEESLHTPYPDNSWLRTVTTTKESLVIISPSIVEMDVYSRTLHSPMFPTGTCSRFYPSSPSCATNHDYTLWLPDDPNLSLACDIFVTSTGKKSMNGSRMCGFTDERGYYRTIKGACKLTLCGKPGLRLFDGTWISFPRPEVTTRCLPNQLVNIHNNRIDEVEHLIVEDLIRKREECLDTLETVLMSKSISFRRLSHFRKLVPGYGKAYTILNGSLMETNVHYLKVDNWSEILPSKGCLKINNQCVAHYKGVFFNGIIKGPDGHILIPEMQSSLLKQHMDLLKAAVFPLKHPLIEPGSLFNKDGDADEFVDVHMPDVHKLVSDVDLGLPDWSLYALIGATIIAFFILICLIRICCKKGGRRNSPTNRPDLPIGLSTTPQPKSKVISSWESYKGTSNV.

Residues 1–25 (MSQLNLIPFFCVIIVLSVEDFPLYT) form the signal peptide. Over 26–455 (IPEKIGPWTP…VSDVDLGLPD (430 aa)) the chain is Virion surface. A helical transmembrane segment spans residues 456 to 476 (WSLYALIGATIIAFFILICLI). At 477–522 (RICCKKGGRRNSPTNRPDLPIGLSTTPQPKSKVISSWESYKGTSNV) the chain is on the intravirion side. A lipid anchor (S-palmitoyl cysteine; by host) is attached at Cys480.

Belongs to the lyssavirus glycoprotein family. In terms of assembly, homotrimer. Interacts with matrix protein. Glycosylated and palmitoylated by host. Glycosylation is crucial for glycoprotein export at the cell surface.

The protein resides in the virion membrane. Functionally, attaches the virus to host cellular receptor, inducing endocytosis of the virion. In the endosome, the acidic pH induces conformational changes in the glycoprotein trimer, which trigger fusion between virus and cell membrane. This Homo sapiens (Human) protein is Glycoprotein (G).